Reading from the N-terminus, the 294-residue chain is UDP-3-O-acyl-N-acetylglucosamine deacetylase (294 aa).

Residues histidine 75, histidine 232, and aspartate 236 each coordinate Zn(2+). Histidine 259 functions as the Proton donor in the catalytic mechanism.

The protein belongs to the LpxC family. It depends on Zn(2+) as a cofactor.

It carries out the reaction a UDP-3-O-[(3R)-3-hydroxyacyl]-N-acetyl-alpha-D-glucosamine + H2O = a UDP-3-O-[(3R)-3-hydroxyacyl]-alpha-D-glucosamine + acetate. The protein operates within glycolipid biosynthesis; lipid IV(A) biosynthesis; lipid IV(A) from (3R)-3-hydroxytetradecanoyl-[acyl-carrier-protein] and UDP-N-acetyl-alpha-D-glucosamine: step 2/6. Catalyzes the hydrolysis of UDP-3-O-myristoyl-N-acetylglucosamine to form UDP-3-O-myristoylglucosamine and acetate, the committed step in lipid A biosynthesis. In Campylobacter jejuni subsp. jejuni serotype O:23/36 (strain 81-176), this protein is UDP-3-O-acyl-N-acetylglucosamine deacetylase.